Consider the following 444-residue polypeptide: Trigger factor (444 aa).

In terms of domain architecture, PPIase FKBP-type spans 161 to 246 (GDRVVIDFKG…VQKVEGQKLP (86 aa)).

Belongs to the FKBP-type PPIase family. Tig subfamily.

It is found in the cytoplasm. The enzyme catalyses [protein]-peptidylproline (omega=180) = [protein]-peptidylproline (omega=0). Involved in protein export. Acts as a chaperone by maintaining the newly synthesized protein in an open conformation. Functions as a peptidyl-prolyl cis-trans isomerase. This is Trigger factor from Saccharophagus degradans (strain 2-40 / ATCC 43961 / DSM 17024).